The following is a 471-amino-acid chain: Chromosomal replication initiator protein DnaA (471 aa).

The domain I, interacts with DnaA modulators stretch occupies residues 1–91 (MVDVSETTER…KYWQDESDAV (91 aa)). The tract at residues 91-133 (VYSVDICVSDGVGVQPQMAEHPDGAVDGPPVVMVGGTYDHLSS) is domain II. Residues 134–352 (PLDPRFTFDN…GALNKVVAHS (219 aa)) form a domain III, AAA+ region region. Residues G180, G182, K183, and T184 each contribute to the ATP site. Residues 353 to 471 (SLVGRSVTIE…DINLLIRMLR (119 aa)) form a domain IV, binds dsDNA region.

The protein belongs to the DnaA family. Oligomerizes as a right-handed, spiral filament on DNA at oriC.

The protein localises to the cytoplasm. Its function is as follows. Plays an essential role in the initiation and regulation of chromosomal replication. ATP-DnaA binds to the origin of replication (oriC) to initiate formation of the DNA replication initiation complex once per cell cycle. Binds the DnaA box (a 9 base pair repeat at the origin) and separates the double-stranded (ds)DNA. Forms a right-handed helical filament on oriC DNA; dsDNA binds to the exterior of the filament while single-stranded (ss)DNA is stabiized in the filament's interior. The ATP-DnaA-oriC complex binds and stabilizes one strand of the AT-rich DNA unwinding element (DUE), permitting loading of DNA polymerase. After initiation quickly degrades to an ADP-DnaA complex that is not apt for DNA replication. Binds acidic phospholipids. This chain is Chromosomal replication initiator protein DnaA, found in Anaplasma marginale (strain St. Maries).